A 687-amino-acid polypeptide reads, in one-letter code: Putative secreted metallopeptidase (687 aa).

Residues 1–22 (MLFTSTAVAALSGALLIQPALA) form the signal peptide. N-linked (GlcNAc...) asparagine glycosylation is found at asparagine 54, asparagine 114, asparagine 252, asparagine 256, and asparagine 379.

This sequence belongs to the peptidase M10B family.

It localises to the secreted. This chain is Putative secreted metallopeptidase, found in Arthroderma benhamiae (strain ATCC MYA-4681 / CBS 112371) (Trichophyton mentagrophytes).